Here is a 210-residue protein sequence, read N- to C-terminus: Coatomer subunit zeta-2 (210 aa).

Over residues 1–12 the composition is skewed to basic and acidic residues; sequence MQRPEAWPRPHP. Residues 1 to 34 are disordered; that stretch reads MQRPEAWPRPHPGEGAAAAQAGGPAPPARAGEPS. Positions 13-34 are enriched in low complexity; that stretch reads GEGAAAAQAGGPAPPARAGEPS.

This sequence belongs to the adaptor complexes small subunit family. As to quaternary structure, oligomeric complex.

The protein resides in the cytoplasm. It is found in the endoplasmic reticulum-Golgi intermediate compartment membrane. The protein localises to the golgi apparatus membrane. It localises to the cytoplasmic vesicle. Its subcellular location is the COPI-coated vesicle membrane. In terms of biological role, the coatomer is a cytosolic protein complex that binds to dilysine motifs and reversibly associates with Golgi non-clathrin-coated vesicles, which further mediate biosynthetic protein transport from the ER, via the Golgi up to the trans Golgi network. Coatomer complex is required for budding from Golgi membranes, and is essential for the retrograde Golgi-to-ER transport of dilysine-tagged proteins. The zeta subunit may be involved in regulating the coat assembly and, hence, the rate of biosynthetic protein transport due to its association-dissociation properties with the coatomer complex. In Homo sapiens (Human), this protein is Coatomer subunit zeta-2 (COPZ2).